Here is a 269-residue protein sequence, read N- to C-terminus: Pyrroline-5-carboxylate reductase (269 aa).

It belongs to the pyrroline-5-carboxylate reductase family.

Its subcellular location is the cytoplasm. The catalysed reaction is L-proline + NADP(+) = (S)-1-pyrroline-5-carboxylate + NADPH + 2 H(+). The enzyme catalyses L-proline + NAD(+) = (S)-1-pyrroline-5-carboxylate + NADH + 2 H(+). It functions in the pathway amino-acid biosynthesis; L-proline biosynthesis; L-proline from L-glutamate 5-semialdehyde: step 1/1. With respect to regulation, inhibited by p-chloromercuribenzoate. In terms of biological role, catalyzes the reduction of 1-pyrroline-5-carboxylate (PCA) to L-proline. Does not catalyze the reverse reaction. This is Pyrroline-5-carboxylate reductase from Escherichia coli (strain K12).